The chain runs to 80 residues: MNKVLFLCLVVLCATSAFAAEEEYVERAPVKRALLSCRCEGKTEYGDKWLFHGGCPNNYGYNYKCFMKPGAVCCYPQNGR.

The signal sequence occupies residues 1 to 19 (MNKVLFLCLVVLCATSAFA). The propeptide occupies 20–30 (AEEEYVERAPV). Cystine bridges form between cysteine 37/cysteine 73, cysteine 39/cysteine 65, and cysteine 55/cysteine 74. Position 56 is a hydroxyproline (proline 56).

This sequence belongs to the sea anemone type 3 (BDS) potassium channel toxin family.

The protein resides in the secreted. Its subcellular location is the nematocyst. Functionally, neurotoxon that induces paralysis when injected into crabs. The chain is Delta-actitoxin-Amc2a from Antheopsis maculata (Sea anemone).